Here is a 387-residue protein sequence, read N- to C-terminus: 4-hydroxy-3-methylbut-2-en-1-yl diphosphate synthase (flavodoxin) (387 aa).

Residues C280, C283, C315, and E322 each contribute to the [4Fe-4S] cluster site.

This sequence belongs to the IspG family. [4Fe-4S] cluster is required as a cofactor.

The enzyme catalyses (2E)-4-hydroxy-3-methylbut-2-enyl diphosphate + oxidized [flavodoxin] + H2O + 2 H(+) = 2-C-methyl-D-erythritol 2,4-cyclic diphosphate + reduced [flavodoxin]. Its pathway is isoprenoid biosynthesis; isopentenyl diphosphate biosynthesis via DXP pathway; isopentenyl diphosphate from 1-deoxy-D-xylulose 5-phosphate: step 5/6. Functionally, converts 2C-methyl-D-erythritol 2,4-cyclodiphosphate (ME-2,4cPP) into 1-hydroxy-2-methyl-2-(E)-butenyl 4-diphosphate. The polypeptide is 4-hydroxy-3-methylbut-2-en-1-yl diphosphate synthase (flavodoxin) (Mycobacterium bovis (strain BCG / Pasteur 1173P2)).